Reading from the N-terminus, the 716-residue chain is Lamin-like protein (716 aa).

Basic residues-rich tracts occupy residues 1–10 and 35–45; these read MDMSKKKSKR and KKTKTTTKKKA. The interval 1-107 is disordered; it reads MDMSKKKSKR…TIQSIPTTPI (107 aa). The span at 62–107 shows a compositional bias: low complexity; that stretch reads ITTTTTSTSTTNNNNITTTSTSSQQSNGTLSSSSSPTIQSIPTTPI. Residues 130–450 adopt a coiled-coil conformation; it reads LREKDELSLI…KMRKQMADLK (321 aa). One can recognise an IF rod domain in the interval 132–515; it reads EKDELSLIHN…ELVKGFEKTV (384 aa). The Nuclear localization signal signature appears at 519–522; it reads KRKR. The interval 519–584 is disordered; the sequence is KRKRSKLQHE…PTGPEQSELF (66 aa). Positions 532-545 are enriched in polar residues; sequence AANQDQNGMTIEEQ. Over residues 546–564 the composition is skewed to low complexity; the sequence is SSTSTTTTTSATGSSSSTS. Residues 565 to 584 show a composition bias toward polar residues; that stretch reads HLDNIDSSKLPTGPEQSELF. One can recognise an LTD domain in the interval 575 to 698; it reads PTGPEQSELF…EETTTVTLPA (124 aa). Residues 713–716 carry the CAAX motif motif; it reads CLIM.

The protein belongs to the intermediate filament family. In terms of assembly, homodimer. Lamin dimers then assemble into dimeric head-to-tail polymers. Ultimately, two head-to-tail polymers assemble laterally into a protofilament with a uniformly shaped rod of 3.5 nm in diameter.

It is found in the nucleus lamina. The protein resides in the nucleus envelope. The protein localises to the nucleus inner membrane. In terms of biological role, lamins are intermediate filament proteins that assemble into a filamentous meshwork, and which constitute the major components of the nuclear lamina, a fibrous layer on the nucleoplasmic side of the inner nuclear membrane. Lamins provide a framework for the nuclear envelope, bridging the nuclear envelope and chromatin, thereby playing an important role in nuclear assembly, chromatin organization, nuclear membrane and telomere dynamics. The structural integrity of the lamina is strictly controlled by the cell cycle, as seen by the disintegration and formation of the nuclear envelope in prophase and telophase, respectively. Helps to maintain integrity of nuclear structures in response to mechanical stress. The protein is Lamin-like protein of Dictyostelium discoideum (Social amoeba).